Here is a 201-residue protein sequence, read N- to C-terminus: MQTSPLLESLMEALRCLPGVGPKSAQRMAFHLLQRNRSGGMRLAQALTRAMSEIGHCKYCRTFTEQEQCTICANPRRQQNGQICVVESPADIHAIEQTGQFAGRYFVLMGHLSPLDGIGPMDIGLDRLEDRLATEEISEVILATNPTVEGEATANYIAEICVQYGVTASRIAHGVPVGGELEMVDGTTLSHSLAGRQKITY.

The C4-type zinc finger occupies 57–72 (CKYCRTFTEQEQCTIC). Residues 81-176 (GQICVVESPA…TASRIAHGVP (96 aa)) form the Toprim domain.

Belongs to the RecR family.

Its function is as follows. May play a role in DNA repair. It seems to be involved in an RecBC-independent recombinational process of DNA repair. It may act with RecF and RecO. In Photorhabdus laumondii subsp. laumondii (strain DSM 15139 / CIP 105565 / TT01) (Photorhabdus luminescens subsp. laumondii), this protein is Recombination protein RecR.